Here is a 617-residue protein sequence, read N- to C-terminus: Transmembrane protein 232 (617 aa).

A helical membrane pass occupies residues Leu129–Leu149. Residues Leu567 to Gln604 are a coiled coil. Residues Glu598 to Glu617 are disordered.

It localises to the membrane. In terms of biological role, plays a critical role for male fertility and sperm motility by regulating sperm cytoplasm removal and maintaining axoneme integrity. This chain is Transmembrane protein 232 (Tmem232), found in Rattus norvegicus (Rat).